Consider the following 478-residue polypeptide: Ankyrin repeat and BTB/POZ domain-containing protein 1 (478 aa).

2 ANK repeats span residues 1–31 (MDTS…EVNV) and 35–64 (WDST…RCEA). 2 BTB domains span residues 115–182 (SDVV…DIGV) and 272–346 (PDIC…ELPP). Residues 450-478 (TVQTYSAIEEAQQQLRALENLLVSIGLDC) are a coiled coil.

Its subcellular location is the cytoplasm. Functionally, may act as a mediator of the PTEN growth-suppressive signaling pathway. May play a role in developmental processes. This chain is Ankyrin repeat and BTB/POZ domain-containing protein 1, found in Rattus norvegicus (Rat).